The sequence spans 444 residues: 23S rRNA (uracil(1939)-C(5))-methyltransferase RlmD (444 aa).

The TRAM domain maps to 5-67 (RNRLDRTPFQ…RHFDEAKTVE (63 aa)). [4Fe-4S] cluster contacts are provided by cysteine 80, cysteine 86, cysteine 89, and cysteine 168. Residues glutamine 276, phenylalanine 305, asparagine 310, glutamate 326, aspartate 353, and aspartate 374 each coordinate S-adenosyl-L-methionine. Cysteine 400 serves as the catalytic Nucleophile.

This sequence belongs to the class I-like SAM-binding methyltransferase superfamily. RNA M5U methyltransferase family. RlmD subfamily.

It carries out the reaction uridine(1939) in 23S rRNA + S-adenosyl-L-methionine = 5-methyluridine(1939) in 23S rRNA + S-adenosyl-L-homocysteine + H(+). Catalyzes the formation of 5-methyl-uridine at position 1939 (m5U1939) in 23S rRNA. This Xanthomonas euvesicatoria pv. vesicatoria (strain 85-10) (Xanthomonas campestris pv. vesicatoria) protein is 23S rRNA (uracil(1939)-C(5))-methyltransferase RlmD.